The following is a 179-amino-acid chain: ATP synthase subunit delta (179 aa).

Belongs to the ATPase delta chain family. As to quaternary structure, F-type ATPases have 2 components, F(1) - the catalytic core - and F(0) - the membrane proton channel. F(1) has five subunits: alpha(3), beta(3), gamma(1), delta(1), epsilon(1). F(0) has three main subunits: a(1), b(2) and c(10-14). The alpha and beta chains form an alternating ring which encloses part of the gamma chain. F(1) is attached to F(0) by a central stalk formed by the gamma and epsilon chains, while a peripheral stalk is formed by the delta and b chains.

It localises to the cell inner membrane. Its function is as follows. F(1)F(0) ATP synthase produces ATP from ADP in the presence of a proton or sodium gradient. F-type ATPases consist of two structural domains, F(1) containing the extramembraneous catalytic core and F(0) containing the membrane proton channel, linked together by a central stalk and a peripheral stalk. During catalysis, ATP synthesis in the catalytic domain of F(1) is coupled via a rotary mechanism of the central stalk subunits to proton translocation. Functionally, this protein is part of the stalk that links CF(0) to CF(1). It either transmits conformational changes from CF(0) to CF(1) or is implicated in proton conduction. The protein is ATP synthase subunit delta of Anaeromyxobacter dehalogenans (strain 2CP-1 / ATCC BAA-258).